The sequence spans 435 residues: Adenylosuccinate synthetase (435 aa).

Residues 11-17 and 39-41 each bind GTP; these read GDEGKGK and GHT. Asp-12 (proton acceptor) is an active-site residue. Positions 12 and 39 each coordinate Mg(2+). IMP-binding positions include 12–15, 37–40, Thr-128, Arg-142, Gln-223, Thr-238, and Arg-302; these read DEGK and NAGH. His-40 serves as the catalytic Proton donor. 298 to 304 contacts substrate; that stretch reads SVTGRPR. Residues Arg-304, 330–332, and 412–414 each bind GTP; these read KLD and STG.

This sequence belongs to the adenylosuccinate synthetase family. Homodimer. Mg(2+) serves as cofactor.

It is found in the cytoplasm. It carries out the reaction IMP + L-aspartate + GTP = N(6)-(1,2-dicarboxyethyl)-AMP + GDP + phosphate + 2 H(+). Its pathway is purine metabolism; AMP biosynthesis via de novo pathway; AMP from IMP: step 1/2. Plays an important role in the de novo pathway of purine nucleotide biosynthesis. Catalyzes the first committed step in the biosynthesis of AMP from IMP. The sequence is that of Adenylosuccinate synthetase from Coxiella burnetii (strain RSA 493 / Nine Mile phase I).